The primary structure comprises 399 residues: Immunoglobulin heavy constant gamma 1 (399 aa).

Residues 1-21 (ASTKGPSVFPLAPSSKSTSGG) are disordered. Residues 1-98 (ASTKGPSVFP…PSNTKVDKKV (98 aa)) are CH1. The Extracellular segment spans residues 1 to 350 (ASTKGPSVFP…DGELDGLWTT (350 aa)). 3 Ig-like domains span residues 6–99 (PSVF…KKVE), 121–220 (PSVF…KTIS), and 229–325 (PQVY…KSLS). The cysteines at positions 27 and 83 are disulfide-linked. Positions 99–110 (EPKSCDKTHTCP) are hinge. The interval 111–223 (PCPAPELLGG…PIEKTISKAK (113 aa)) is CH2. Cystine bridges form between cysteine 144/cysteine 204 and cysteine 250/cysteine 308. An N-linked (GlcNAc...) (complex) asparagine glycan is attached at asparagine 180. The tract at residues 224 to 330 (GQPREPQVYT…QKSLSLSPEL (107 aa)) is CH3. The helical transmembrane segment at 351 to 371 (ITIFITLFLLSVCYSATVTFF) threads the bilayer. Over 372-399 (KVKWIFSSVVDLKQTIIPDYRNMIGQGA) the chain is Cytoplasmic.

As to quaternary structure, immunoglobulins are composed of two identical heavy chains and two identical light chains; disulfide-linked. Interacts with FCGR1A; this interaction mediates IgG effector functions on monocytes. Interacts with FCGR2A and FCGR3A. Post-translationally, glycosylation on Asn-180 is required for interaction with Fc receptors and ability to activate the complement pathway. (Microbial infection) Deglycosylation on Asn-180 by S.pyogenes EndoS or Endos2 endoglucosidases prevents interaction between immunoglobulin-gamma (IgG) and Fc receptors, impairing ability to activate the complement pathway.

Its subcellular location is the secreted. It localises to the cell membrane. In terms of biological role, constant region of immunoglobulin heavy chains. Immunoglobulins, also known as antibodies, are membrane-bound or secreted glycoproteins produced by B lymphocytes. In the recognition phase of humoral immunity, the membrane-bound immunoglobulins serve as receptors which, upon binding of a specific antigen, trigger the clonal expansion and differentiation of B lymphocytes into immunoglobulins-secreting plasma cells. Secreted immunoglobulins mediate the effector phase of humoral immunity, which results in the elimination of bound antigens. The antigen binding site is formed by the variable domain of one heavy chain, together with that of its associated light chain. Thus, each immunoglobulin has two antigen binding sites with remarkable affinity for a particular antigen. The variable domains are assembled by a process called V-(D)-J rearrangement and can then be subjected to somatic hypermutations which, after exposure to antigen and selection, allow affinity maturation for a particular antigen. Mediates IgG effector functions on monocytes triggering ADCC of virus-infected cells. In Homo sapiens (Human), this protein is Immunoglobulin heavy constant gamma 1.